Consider the following 473-residue polypeptide: Peptidoglycan DL-endopeptidase CwlO (473 aa).

Residues 1–30 (MRKSLITLGLASVIGTSSFLIPFTSKTASA) form the signal peptide. Disordered stretches follow at residues 31-52 (ETLDEKKQKIESKQSEVASSIE), 79-98 (ALDTSNKIEDKKEENDKTKE), and 237-337 (EASE…GTVI). Residues 33 to 44 (LDEKKQKIESKQ) show a composition bias toward basic and acidic residues. Residues 241–250 (LANQKANTEA) are compositionally biased toward polar residues. Basic and acidic residues-rich tracts occupy residues 251–260 (EQARIKKEQE) and 267–277 (KKQEEAQKASD). Over residues 291–337 (SSKASSSDDSSDNSSDNSSNGSSNSSSNGSSSKKSSGSNSNSGGTVI) the composition is skewed to low complexity. The 132-residue stretch at 340–471 (SGGIEGAISV…AAFKGVVRRV (132 aa)) folds into the NlpC/P60 domain. Cys377 functions as the Nucleophile in the catalytic mechanism. His431 functions as the Proton acceptor in the catalytic mechanism. The active site involves Asn443.

The protein belongs to the peptidase C40 family. Identified in the extracellular proteome as a number of processing products of about 50 and 30 kDa.

The protein localises to the secreted. The protein resides in the cell wall. With respect to regulation, detected in exponentially growing cells, the 50 and 30 kDa processing products disappear upon entry into stationary phase with the concomitant appearance of a 20 kDa products. The 50 kDa form persists in the absence of extracellular proteases. Functionally, the C-terminal part of CwlO shows a cell wall hydrolytic DL-endopeptidase activity. The polypeptide is Peptidoglycan DL-endopeptidase CwlO (cwlO) (Bacillus subtilis (strain 168)).